We begin with the raw amino-acid sequence, 235 residues long: Sugar fermentation stimulation protein homolog (235 aa).

The protein belongs to the SfsA family.

This Alkaliphilus oremlandii (strain OhILAs) (Clostridium oremlandii (strain OhILAs)) protein is Sugar fermentation stimulation protein homolog.